The sequence spans 313 residues: Urease accessory protein UreD (313 aa).

The disordered stretch occupies residues 1–30 (MTDLSFPGQAASPGEGAGQTPSGGSGHRFD). Positions 15–26 (EGAGQTPSGGSG) are enriched in gly residues.

This sequence belongs to the UreD family. In terms of assembly, ureD, UreF and UreG form a complex that acts as a GTP-hydrolysis-dependent molecular chaperone, activating the urease apoprotein by helping to assemble the nickel containing metallocenter of UreC. The UreE protein probably delivers the nickel.

It localises to the cytoplasm. Required for maturation of urease via the functional incorporation of the urease nickel metallocenter. This is Urease accessory protein UreD from Chromohalobacter salexigens (strain ATCC BAA-138 / DSM 3043 / CIP 106854 / NCIMB 13768 / 1H11).